A 1081-amino-acid chain; its full sequence is Teashirt homolog 3 (1081 aa).

Disordered stretches follow at residues Leu25–Val104, Pro141–Gly161, and His238–Pro257. A compositionally biased stretch (acidic residues) spans Val26–Ala37. Residues Ser68 to Asp87 are compositionally biased toward basic and acidic residues. 2 consecutive C2H2-type zinc fingers follow at residues Phe214 to His238 and Leu275 to His299. A compositionally biased stretch (basic and acidic residues) spans His238 to Asp247. The tract at residues Ser325 to Ser346 is disordered. The C2H2-type 3; atypical zinc-finger motif lies at Lys387 to His410. The segment covering Val474 to Pro491 has biased composition (basic and acidic residues). 4 disordered regions span residues Val474–Asp499, Glu626–Ser699, Leu792–Thr824, and Thr855–Asn897. A coiled-coil region spans residues Asn606–Glu630. Over residues Ser660–Ser670 the composition is skewed to polar residues. Position 682 is a phosphoserine (Ser682). Composition is skewed to low complexity over residues Gly800 to Thr824 and Glu856 to Ser869. The segment at residues Arg891–Gly961 is a DNA-binding region (homeobox; atypical). 2 C2H2-type zinc fingers span residues Phe976–His998 and Tyr1041–His1064.

Belongs to the teashirt C2H2-type zinc-finger protein family. Interacts (via N-terminus) with HDAC1 and HDAC2; the interaction is direct. Found in a trimeric complex with APBB1 and HDAC1; the interaction between HDAC1 and APBB1 is mediated by TSHZ3. Interacts (via homeobox domain) with APBB1 (via PID domain 1). Expressed in corticostriatal neurons.

The protein resides in the nucleus. Its subcellular location is the cell projection. It is found in the growth cone. Functionally, transcriptional regulator involved in developmental processes. Functions in association with APBB1, SET and HDAC factors as a transcriptional repressor, that inhibits the expression of CASP4. TSHZ3-mediated transcription repression involves the recruitment of histone deacetylases HDAC1 and HDAC2. Associates with chromatin in a region surrounding the CASP4 transcriptional start site(s). Regulates the development of neurons involved in both respiratory rhythm and airflow control. Promotes maintenance of nucleus ambiguus (nA) motoneurons, which govern upper airway function, and establishes a respiratory rhythm generator (RRG) activity compatible with survival at birth. Involved in the differentiation of the proximal uretic smooth muscle cells during developmental processes. Involved in the up-regulation of myocardin, that directs the expression of smooth muscle cells in the proximal ureter. Involved in the modulation of glutamatergic synaptic transmission and long-term synaptic potentiation. The sequence is that of Teashirt homolog 3 (Tshz3) from Mus musculus (Mouse).